We begin with the raw amino-acid sequence, 997 residues long: Protein translocase subunit SecA (997 aa).

ATP contacts are provided by residues Q84, 102–106, and D582; that span reads GEGKT. The interval 950 to 997 is disordered; that stretch reads PYVPVPEAKPEPSEVFGVERKRATPPPQPGLSRAERRRLMRQEKKRKK. The segment covering 957-971 has biased composition (basic and acidic residues); that stretch reads AKPEPSEVFGVERKR. Basic residues predominate over residues 984–997; it reads ERRRLMRQEKKRKK.

This sequence belongs to the SecA family. In terms of assembly, part of the essential Sec protein translocation apparatus which comprises SecA, SecYEG and auxiliary proteins SecDF. Other proteins may also be involved. Monomer and homodimer.

The protein localises to the cell inner membrane. It localises to the cytoplasm. The enzyme catalyses ATP + H2O + cellular proteinSide 1 = ADP + phosphate + cellular proteinSide 2.. In terms of biological role, part of the Sec protein translocase complex. Interacts with the SecYEG preprotein conducting channel. Has a central role in coupling the hydrolysis of ATP to the transfer of proteins into and across the cell membrane, serving as an ATP-driven molecular motor driving the stepwise translocation of polypeptide chains across the membrane. In Thermus thermophilus (strain ATCC 27634 / DSM 579 / HB8), this protein is Protein translocase subunit SecA.